Reading from the N-terminus, the 505-residue chain is Light-independent protochlorophyllide reductase subunit B (505 aa).

A [4Fe-4S] cluster-binding site is contributed by D36. The active-site Proton donor is the D291. Position 426–427 (426–427 (GM)) interacts with substrate.

This sequence belongs to the ChlB/BchB/BchZ family. As to quaternary structure, protochlorophyllide reductase is composed of three subunits; ChlL, ChlN and ChlB. Forms a heterotetramer of two ChlB and two ChlN subunits. [4Fe-4S] cluster serves as cofactor.

It carries out the reaction chlorophyllide a + oxidized 2[4Fe-4S]-[ferredoxin] + 2 ADP + 2 phosphate = protochlorophyllide a + reduced 2[4Fe-4S]-[ferredoxin] + 2 ATP + 2 H2O. It functions in the pathway porphyrin-containing compound metabolism; chlorophyll biosynthesis (light-independent). Its function is as follows. Component of the dark-operative protochlorophyllide reductase (DPOR) that uses Mg-ATP and reduced ferredoxin to reduce ring D of protochlorophyllide (Pchlide) to form chlorophyllide a (Chlide). This reaction is light-independent. The NB-protein (ChlN-ChlB) is the catalytic component of the complex. This is Light-independent protochlorophyllide reductase subunit B from Gloeobacter violaceus (strain ATCC 29082 / PCC 7421).